We begin with the raw amino-acid sequence, 357 residues long: Histidinol-phosphate aminotransferase (357 aa).

N6-(pyridoxal phosphate)lysine is present on Lys221.

The protein belongs to the class-II pyridoxal-phosphate-dependent aminotransferase family. Histidinol-phosphate aminotransferase subfamily. Pyridoxal 5'-phosphate serves as cofactor.

It catalyses the reaction L-histidinol phosphate + 2-oxoglutarate = 3-(imidazol-4-yl)-2-oxopropyl phosphate + L-glutamate. It functions in the pathway amino-acid biosynthesis; L-histidine biosynthesis; L-histidine from 5-phospho-alpha-D-ribose 1-diphosphate: step 7/9. The sequence is that of Histidinol-phosphate aminotransferase (hisC) from Sulfurisphaera tokodaii (strain DSM 16993 / JCM 10545 / NBRC 100140 / 7) (Sulfolobus tokodaii).